We begin with the raw amino-acid sequence, 167 residues long: NADH-quinone oxidoreductase subunit I (167 aa).

4Fe-4S ferredoxin-type domains are found at residues 59–88 and 98–127; these read RKYK…IEAQ and VRYD…EGPN. [4Fe-4S] cluster is bound by residues Cys-68, Cys-71, Cys-74, Cys-78, Cys-107, Cys-110, Cys-113, and Cys-117.

Belongs to the complex I 23 kDa subunit family. NDH-1 is composed of 14 different subunits. Subunits NuoA, H, J, K, L, M, N constitute the membrane sector of the complex. Requires [4Fe-4S] cluster as cofactor.

The protein localises to the cell inner membrane. The catalysed reaction is a quinone + NADH + 5 H(+)(in) = a quinol + NAD(+) + 4 H(+)(out). Its function is as follows. NDH-1 shuttles electrons from NADH, via FMN and iron-sulfur (Fe-S) centers, to quinones in the respiratory chain. The immediate electron acceptor for the enzyme in this species is believed to be ubiquinone. Couples the redox reaction to proton translocation (for every two electrons transferred, four hydrogen ions are translocated across the cytoplasmic membrane), and thus conserves the redox energy in a proton gradient. The chain is NADH-quinone oxidoreductase subunit I from Ehrlichia canis (strain Jake).